Reading from the N-terminus, the 206-residue chain is 3-demethoxyubiquinol 3-hydroxylase (206 aa).

Fe cation contacts are provided by glutamate 55, glutamate 85, histidine 88, glutamate 137, glutamate 169, and histidine 172.

This sequence belongs to the COQ7 family. The cofactor is Fe cation.

The protein resides in the cell membrane. The enzyme catalyses a 5-methoxy-2-methyl-3-(all-trans-polyprenyl)benzene-1,4-diol + AH2 + O2 = a 3-demethylubiquinol + A + H2O. The protein operates within cofactor biosynthesis; ubiquinone biosynthesis. In terms of biological role, catalyzes the hydroxylation of 2-nonaprenyl-3-methyl-6-methoxy-1,4-benzoquinol during ubiquinone biosynthesis. In Laribacter hongkongensis (strain HLHK9), this protein is 3-demethoxyubiquinol 3-hydroxylase.